Consider the following 384-residue polypeptide: MKKKLVVLGSTGSIGTQTLEVLSHLEDQWEILALSANKSTGLIEKQARKFKPRYLVMMNERAALELKHRLSDMSSEVLSGMEGLITISSLEEADLVINALVGAVGLKPTVAALQSGNTLGLANKESLVIGGEIIKSYLNEEGRVLPVDSEHNAIFQLLNGHNDKEVERLILTASGGPFLELPRERFKDVSVKDALKHPNWDMGGKITIDSATLMNKGLEVIEAHYLFRQPYHNINVVVHPESIIHSMVEFVDKSVIAEMGSADMRMPIQYVLTYPRKVKSLAKRLDLTELGYLTFKKPDTVKFPALKLAYEAGQQGGTMPVVLNAANEIAVSAFMNEKITFDKIPVVIERVMENHQIISSPDLEDVIEVDNWARARAKEVTGQC.

Residues threonine 11, glycine 12, serine 13, isoleucine 14, lysine 38, and asparagine 123 each contribute to the NADPH site. Residue lysine 124 participates in 1-deoxy-D-xylulose 5-phosphate binding. Residue glutamate 125 participates in NADPH binding. Mn(2+) is bound at residue aspartate 148. 1-deoxy-D-xylulose 5-phosphate is bound by residues serine 149, glutamate 150, serine 174, and histidine 197. Glutamate 150 provides a ligand contact to Mn(2+). An NADPH-binding site is contributed by glycine 203. Residues serine 210, asparagine 215, lysine 216, and glutamate 219 each coordinate 1-deoxy-D-xylulose 5-phosphate. Glutamate 219 provides a ligand contact to Mn(2+).

This sequence belongs to the DXR family. It depends on Mg(2+) as a cofactor. Requires Mn(2+) as cofactor.

It catalyses the reaction 2-C-methyl-D-erythritol 4-phosphate + NADP(+) = 1-deoxy-D-xylulose 5-phosphate + NADPH + H(+). It functions in the pathway isoprenoid biosynthesis; isopentenyl diphosphate biosynthesis via DXP pathway; isopentenyl diphosphate from 1-deoxy-D-xylulose 5-phosphate: step 1/6. In terms of biological role, catalyzes the NADPH-dependent rearrangement and reduction of 1-deoxy-D-xylulose-5-phosphate (DXP) to 2-C-methyl-D-erythritol 4-phosphate (MEP). The protein is 1-deoxy-D-xylulose 5-phosphate reductoisomerase of Halothermothrix orenii (strain H 168 / OCM 544 / DSM 9562).